Here is a 232-residue protein sequence, read N- to C-terminus: Large ribosomal subunit protein uL1 (232 aa).

It belongs to the universal ribosomal protein uL1 family. As to quaternary structure, part of the 50S ribosomal subunit.

In terms of biological role, binds directly to 23S rRNA. The L1 stalk is quite mobile in the ribosome, and is involved in E site tRNA release. Functionally, protein L1 is also a translational repressor protein, it controls the translation of the L11 operon by binding to its mRNA. The protein is Large ribosomal subunit protein uL1 of Mesorhizobium japonicum (strain LMG 29417 / CECT 9101 / MAFF 303099) (Mesorhizobium loti (strain MAFF 303099)).